The chain runs to 318 residues: Thioredoxin reductase (318 aa).

36-43 contacts FAD; the sequence is TGMQQGGQ. Cysteines 136 and 139 form a disulfide. 286 to 295 is a binding site for FAD; sequence DVMDHNYRQA.

The protein belongs to the class-II pyridine nucleotide-disulfide oxidoreductase family. As to quaternary structure, homodimer. It depends on FAD as a cofactor.

Its subcellular location is the cytoplasm. It catalyses the reaction [thioredoxin]-dithiol + NADP(+) = [thioredoxin]-disulfide + NADPH + H(+). This Vibrio cholerae serotype O1 (strain ATCC 39315 / El Tor Inaba N16961) protein is Thioredoxin reductase (trxB).